The chain runs to 519 residues: MIENQVPFYLLIFLVGIGLGVLTFWAYHRFALGGFKRISKDIISRAEQETSELRKTNELSLKQKQVEYQRELEQMWQQERKKLQQEEERLKQREDKLESRMNLVEKKLSDTEKREAILIGRKAQLDEEKKQTIESHSKLLSILEKASGLTSSEAKEILLSRLSNEVKTESANLIRRIRKEAEEEAEKIASTIIATSINRLAVSCASESTVCTVTIPNEDMKGRIIGREGRNIRALERETGVNFIIDDTPGAVVLSGFDPVRKHIAKMALTELVQDGRIHPTRIEEVVEKATINVHKQIKQYGEDAALRAGAMNLHPDLINLLGKLKFRFSYGQNVLDHSLEVSHLMGLMAAELGLDIRLAKRIGLLHDLGKAVTHEIEGSHAIIGHDLALKLGENKEVANGIGCHHHEMAPLTIEADLCSAADAISASREGARIEAVEEYIKRLRKLEEIALEFAGVDKAYAMQAGREIRIVVLPDQVDDAGVVNLARDLTKRIEQELSYPGKIKVTVIREKRVVEYAV.

A helical membrane pass occupies residues 6-26 (VPFYLLIFLVGIGLGVLTFWA). One can recognise a KH domain in the interval 209 to 272 (TVCTVTIPNE…HIAKMALTEL (64 aa)). Residues 335–428 (VLDHSLEVSH…CSAADAISAS (94 aa)) form the HD domain.

It belongs to the RNase Y family.

It is found in the cell membrane. In terms of biological role, endoribonuclease that initiates mRNA decay. The sequence is that of Ribonuclease Y from Protochlamydia amoebophila (strain UWE25).